The following is a 285-amino-acid chain: Octanoyltransferase (285 aa).

The region spanning Leu50–Ile277 is the BPL/LPL catalytic domain. Substrate contacts are provided by residues Arg89 to His96, Ser189 to Gly191, and Gly202 to Ala204. Residue Cys220 is the Acyl-thioester intermediate of the active site.

It belongs to the LipB family.

Its subcellular location is the cytoplasm. It catalyses the reaction octanoyl-[ACP] + L-lysyl-[protein] = N(6)-octanoyl-L-lysyl-[protein] + holo-[ACP] + H(+). It participates in protein modification; protein lipoylation via endogenous pathway; protein N(6)-(lipoyl)lysine from octanoyl-[acyl-carrier-protein]: step 1/2. In terms of biological role, catalyzes the transfer of endogenously produced octanoic acid from octanoyl-acyl-carrier-protein onto the lipoyl domains of lipoate-dependent enzymes. Lipoyl-ACP can also act as a substrate although octanoyl-ACP is likely to be the physiological substrate. This is Octanoyltransferase from Psychrobacter cryohalolentis (strain ATCC BAA-1226 / DSM 17306 / VKM B-2378 / K5).